Consider the following 333-residue polypeptide: Nucleoid-associated protein VC0395_A1624/VC395_2154 (333 aa).

Belongs to the YejK family.

Its subcellular location is the cytoplasm. It localises to the nucleoid. This is Nucleoid-associated protein VC0395_A1624/VC395_2154 from Vibrio cholerae serotype O1 (strain ATCC 39541 / Classical Ogawa 395 / O395).